The following is a 2437-amino-acid chain: MSKVFVDIEAESPFLKSLQRAFPAFEVEAQQVTPNDHANARAFSHLATKLIEQETEKDTLILDIGSAPARRMMSEHTYHCVCPMRSAEDPERLLYYARKLAKASGEVVDRNIAAKIDDLQSVMATPDNESRTFCLHTDQTCRTQAEVAVYQDVYAVHAPTSLYFQAMKGVRTAYWIGFDTTPFMFDTMAGAYPTYATNWADEQVLKARNIGLCSASLTEGHLGKLSIMRKKKMTPSDQIMFSVGSTLYIESRRLLKSWHLPSVFHLKGRQSYTCRCDTIVSCEGYVVKKITMSPGVFGKTSGYAVTHHAEGFLVCKTTDTIAGERVSFPICTYVPSTICDQMTGILATEVTPEDAQKLLVGLNQRIVVNGRTQRNTNTMKNYLLPVVSQAFSKWAKEYRLDQEDEKNMGMRERTLTCCCLWAFKTHKNHTMYKKPDTQTIVKVPSEFNSFVIPSLWSAGLSIGIRHRIRLLLQSRRVEPLVPSMDVGEARAAEREAAEAKEAEDTLAALPPLIPTAPVLDDIPEVDVEELEFRAGAGVVETPRNALKVTPQDRDTMVGSYLVLSPQTVLKSVKLQALHPLAESVKIITHKGRAGRYQVDAYDGRVLLPTGAAIPVPDFQALSESATMVYNEREFINRKLYHIAVHGAALNTDEEGYEKVRAESTDAEYVYDVDRKQCVKREEAEGLVMIGDLINPPFHEFAYEGLKRRPAAPYKTTVVGVFGVPGSGKSGIIKSLVTRGDLVASGKKENCQEIMLDVKRYRDLDMTAKTVDSVLLNGVKQTVDVLYVDEAFACHAGTLLALIATVRPRKKVVLCGDPKQCGFFNLMQLQVNFNHNICTEVDHKSISRRCTLPITAIVSTLHYEGRMRTTNPYNKPVIIDTTGQTKPNREDIVLTCFRGWVKQLQLDYRGHEVMTAAASQGLTRKGVYAVRMKVNENPLYAQSSEHVNVLLTRTEGRLVWKTLSGDPWIKTLSNIPKGNFTATLEDWQREHDTIMRAITQEAAPLDVFQNKAKVCWAKCLVPVLETAGIKLSATDWSAIILAFKEDRAYSPEVALNEICTKIYGVDLDSGLFSAPRVSLHYTTNHWDNSPGGRMYGFSVEAANRLEQQHPFYRGRWASGQVLVAERKTQPIDVTCNLIPFNRRLPHTLVTEYHPIKGERVEWLVNKIPGYHVLLVSEYNLILPRRKVTWIAPPTVTGADLTYDLDLGLPPNAGRYDLVFVNMHTPYRLHHYQQCVDHAMKLQMLGGDALYLLKPGGSLLLSTYAYADRTSEAVVTALARRFSSFRAVTVRCVTSNTEVFLLFTNFDNGRRTVTLHQTNGKLSSIYAGTVLQAAGCAPAYAVKRADIATAIEDAVVNAANHRGQVGDGVCRAVARKWPQAFRNAATPVGTAKTVKCDETYIIHAVGPNFNNTSEAEGDRDLAAAYRAVAAEINRLSISSVAIPLLSTGIFSAGKDRVHQSLSHLLAAMDTTEARVTIYCRDKTWEQKIKTVLQNRSATELVSDELQFEVNLTRVHPDSSLVGRPGYSTTDGTLYSYMEGTKFHQAALDMAEITTLWPRVQDANEHICLYALGETMDNIRARCPVEDSDSSTPPKTVPCLCRYAMTPERVTRLRMHHTKDFVVCSSFQLPKYRIPGVQRVKCEKVMLFDAAPPASVSPVQYLTNQSETTISLSSFSITSDSSSLSTFPDLESAEELDHDSQSVRPALNEPDDHQPTPTAELATHPVPPPRPNRARRLAAARVQVQVEVHQPPSNQPTKPIPAPRTSLRPVPAPRRYVPRPVVELPWPLETIDVEFGAPTEEESDITFGDFSASEWETISNSSXLGRAGAYIFSSDVGPGHLQQKSVRQHDLEVPIMDRVIEEKVYPPKLDEAKEKQLLLKLQMHATDANRSRYQSRKVENMKATIIDRLKQGSAYYVSAAADKAVTYHVRYAKPRYSVPVMQRLSSATIAVATCNEFLARNYPTVASYQITDEYDAYLDMVDGSESCLDRANFCPAKLRCYPKHHAYHMPQIRSAVPSPFQNTLQNVLAAATKRNCNVTQMRELPTLDSAVYNVECFRKYACNNEYWEEFAKKPIRITTENLTTYVTKLKGGKAAALFAKTHNLVPLQEVPMDRFIMDMKRDVKVTPGTKHTEERPKVQVIQAAEPLATAYLCGIHRELVRRLNAVLLPNIHTLFDMSAEDFDAIISEHFKPGDHVLETDIASFDKSQDDSLALTGLMILEDLGVDNQLLDLIEAAFGQITSCHLPTGTRFKFGAMMKSGMFLTLFINTVLNITIASRVLEARLTNSACAAFIGDDNVVHGVVSDKLMADRCATWVNMEVKIIDAVMCIKPPYFCGGFLVYDHVTRTACRIADPLKRLFKLGKPLPADDCQDEDRRRALYDEVKKWSRSGLGSEIEVALASRYRLEGSYNLLLAMSTFAHSMKNFSALRGPVIHLYGGPK.

The region spanning 28–259 (EAQQVTPNDH…ESRRLLKSWH (232 aa)) is the Alphavirus-like MT domain. The nsP1 membrane-binding stretch occupies residues 244–263 (GSTLYIESRRLLKSWHLPSV). S-palmitoyl cysteine; by host attachment occurs at residues C417 and C419. The region spanning 691–843 (DLINPPFHEF…HNICTEVDHK (153 aa)) is the (+)RNA virus helicase ATP-binding domain. 722–729 (GVPGSGKS) contributes to the a ribonucleoside 5'-triphosphate binding site. The 149-residue stretch at 844 to 992 (SISRRCTLPI…LEDWQREHDT (149 aa)) folds into the (+)RNA virus helicase C-terminal domain. Residues 1005–1327 (DVFQNKAKVC…GKLSSIYAGT (323 aa)) form the Peptidase C9 domain. The interval 1006–1025 (VFQNKAKVCWAKCLVPVLET) is nucleolus localization signal. The For cysteine protease nsP2 activity role is filled by C1014. Residues 1059-1068 (TKIYGVDLDS) carry the Nuclear export signal motif. The active-site For cysteine protease nsP2 activity is the H1084. A Nuclear localization signal motif is present at residues 1182–1186 (PRRKV). In terms of domain architecture, Macro spans 1335–1493 (APAYAVKRAD…QKIKTVLQNR (159 aa)). ADP-D-ribose is bound by residues D1344, N1358, G1366, G1446, I1447, and F1448. C1596, C1598, C1621, and C1639 together coordinate Zn(2+). The segment covering 1675–1684 (TSDSSSLSTF) has biased composition (low complexity). The tract at residues 1675–1729 (TSDSSSLSTFPDLESAEELDHDSQSVRPALNEPDDHQPTPTAELATHPVPPPRPN) is disordered. 2 short sequence motifs (FGDF; binding to host G3BP1) span residues 1792–1795 (FGAP) and 1804–1807 (FGDF). The RdRp catalytic domain occupies 2191–2306 (DHVLETDIAS…HGVVSDKLMA (116 aa)).

As to quaternary structure, interacts with non-structural protein 3. Interacts with RNA-directed RNA polymerase nsP4. Interacts with protease nsP2. interacts with itself. In terms of assembly, interacts with mRNA-capping enzyme nsP1. Interacts with host DDX1. Interacts with host DDX3. Interacts (via C-terminus) with host G3BP1; this interaction inhibits the formation of host stress granules on viral mRNAs and the nsp3-G3BP1 complexes bind viral RNAs and probably orchestrate the assembly of viral replication complexes. Interacts (via C-terminus) with host G3BP2; this interaction inhibits the formation of host stress granules on viral mRNAs and the nsp3-G3BP2 complexes bind viral RNAs and probably orchestrate the assembly of viral replication complexes. Interacts with mRNA-capping enzyme nsP1. Interacts with protease nsP2. interacts with itself. As to quaternary structure, interacts with RNA-directed RNA polymerase nsP4. Interacts with mRNA-capping enzyme nsP1. Interacts with KPNA1/karyopherin-alpha1; this interaction probably allows the active transport of protease nsP2 into the host nucleus. Interacts with host POLR2A/RPB1; this interaction seems to induce the depletion of host POLR2A and may play a role in the transcriptional shutoff induced by protease nsP2. Interacts with host GTF2E2/TF2E2; this interaction seems to induce the depletion of host GTF2E2/TF2E2 and may play a role in the transcriptional shutoff induced by protease nsP2. Mg(2+) serves as cofactor. It depends on Mn(2+) as a cofactor. In terms of processing, specific enzymatic cleavages in vivo yield mature proteins. The processing of the polyprotein is temporally regulated. In early stages (1.7 hpi), P1234 is first cleaved in trans through its nsP2 protease activity, releasing P123' and nsP4, which associate to form the early replication complex. At the same time, P1234 is also cut at the nsP1/nsP2 site early in infection but with lower efficiency. After replication of the viral minus-strand RNAs (4 hpi), the polyproteins are cut at the nsP1/nsP2 and nsP2/nsP3 sites very efficiently, preventing accumulation of P123' and P1234 and allowing the formation of the late replication complex. NsP3'/nsP4 site is not cleaved anymore and P34 is produced rather than nsP4. Specific enzymatic cleavages in vivo yield mature proteins. The processing of the polyprotein is temporally regulated. In early stages (1.7 hpi), P123 is cleaved at the nsP1/nsP2 site with low efficiency. After replication of the viral minus-strand RNAs (4 hpi), the polyproteins are cut at the nsP1/nsP2 and nsP2/nsP3 sites very efficiently, preventing accumulation of P123 and allowing the formation of the late replication complex. Post-translationally, specific enzymatic cleavages in vivo yield mature proteins. The processing of the polyprotein is temporally regulated. In early stages (1.7 hpi), P123' is cleaved at the nsP1/nsP2 site with low efficiency. After replication of the viral minus-strand RNAs (4 hpi), the polyproteins are cut at the nsP1/nsP2 and nsP2/nsP3 sites very efficiently, preventing accumulation of P123' and allowing the formation of the late replication complex. In terms of processing, palmitoylated by host palmitoyltransferases ZDHHC2 and ZDHHC19. Phosphorylated by host on serines and threonines. Post-translationally, ubiquitinated; targets the protein for rapid degradation via the ubiquitin system. Nsp4 is present in extremely low quantities due to low frequency of translation through the amber stop-codon and the degradation by the ubiquitin pathway.

The protein localises to the host cytoplasmic vesicle membrane. It localises to the host cell membrane. It is found in the host cell projection. The protein resides in the host filopodium. Its subcellular location is the host nucleus. The protein localises to the host cytoplasm. The catalysed reaction is GTP + S-adenosyl-L-methionine = N(7)-methyl-GTP + S-adenosyl-L-homocysteine. It catalyses the reaction N(7)-methyl-GTP + L-histidyl-[protein] = N(tele)-(N(7)-methylguanosine 5'-phospho)-L-histidyl-[protein] + diphosphate. It carries out the reaction N(tele)-(N(7)-methylguanosine 5'-phospho)-L-histidyl-[protein] + a 5'-end diphospho-(purine-ribonucleoside) in mRNA + H(+) = a 5'-end (N(7)-methyl 5'-triphosphoguanosine)-(purine-ribonucleoside) in mRNA + L-histidyl-[protein]. The enzyme catalyses a 5'-end triphospho-ribonucleoside in mRNA + H2O = a 5'-end diphospho-ribonucleoside in mRNA + phosphate + H(+). The catalysed reaction is a ribonucleoside 5'-triphosphate + H2O = a ribonucleoside 5'-diphosphate + phosphate + H(+). It catalyses the reaction ATP + H2O = ADP + phosphate + H(+). It carries out the reaction RNA(n) + a ribonucleoside 5'-triphosphate = RNA(n+1) + diphosphate. The enzyme catalyses RNA(n) + ATP = RNA(n)-3'-adenine ribonucleotide + diphosphate. The catalysed reaction is 4-O-(ADP-D-ribosyl)-L-aspartyl-[protein] + H2O = L-aspartyl-[protein] + ADP-D-ribose + H(+). It catalyses the reaction 5-O-(ADP-D-ribosyl)-L-glutamyl-[protein] + H2O = L-glutamyl-[protein] + ADP-D-ribose + H(+). It carries out the reaction ADP-alpha-D-ribose 1''-phosphate + H2O = ADP-D-ribose + phosphate. Its function is as follows. Inactive precursor of the viral replicase, which is activated by cleavages carried out by the viral protease nsP2. Functionally, the early replication complex formed by the polyprotein P123 and nsP4 synthesizes minus-strand RNAs. As soon P123 is cleaved into mature proteins, the plus-strand RNAs synthesis begins. The early replication complex formed by the polyprotein P123' and nsP4 synthesizes minus-strand RNAs. Polyprotein P123' is a short-lived polyprotein that accumulates during early stage of infection. As soon P123' is cleaved into mature proteins, the plus-strand RNAs synthesis begins. In terms of biological role, cytoplasmic capping enzyme that catalyzes two virus-specific reactions: methyltransferase and nsP1 guanylyltransferase. mRNA-capping is necessary since all viral RNAs are synthesized in the cytoplasm, and host capping enzymes are restricted to the nucleus. The enzymatic reaction involves a covalent link between 7-methyl-GMP and nsP1, whereas eukaryotic capping enzymes form a covalent complex only with GMP. nsP1 capping consists in the following reactions: GTP is first methylated into 7-methyl-GMP and then is covalently linked to nsP1 to form the m7GMp-nsP1 complex from which 7-methyl-GMP complex is transferred to the mRNA to create the cap structure. NsP1 is needed for the initiation of the minus-strand RNAs synthesis. Probably serves as a membrane anchor for the replication complex composed of nsP1-nsP4. Palmitoylated nsP1 is remodeling host cell cytoskeleton, and induces filopodium-like structure formation at the surface of the host cell. Its function is as follows. Multifunctional protein whose N-terminus is part of the RNA polymerase complex and displays NTPase, RNA triphosphatase and helicase activities. NTPase and RNA triphosphatase are involved in viral RNA capping and helicase keeps a check on the dsRNA replication intermediates. The C-terminus harbors a protease that specifically cleaves the polyproteins and releases the mature proteins. Required for the shutoff of minus-strand RNAs synthesis. Specifically inhibits the host IFN response by promoting the nuclear export of host STAT1. Induces host transcription shutoff by inducing rapid proteasome-dependent degradation of POLR2A, a catalytic subunit of the RNAPII complex. The resulting inhibition of cellular protein synthesis serves to ensure maximal viral gene expression and to evade host immune response. Functionally, seems to be essential for minus-strand RNAs and subgenomic 26S mRNAs synthesis. Displays mono-ADP-ribosylhydrolase activity. ADP-ribosylation is a post-translational modification that controls various processes of the host cell and the virus probably needs to revert it for optimal viral replication. Binds proteins of FXR family and sequesters them into the viral RNA replication complexes thereby inhibiting the formation of host stress granules on viral mRNAs. The nsp3'-FXR complexes bind viral RNAs and probably orchestrate the assembly of viral replication complexes, thanks to the ability of FXR family members to self-assemble and bind DNA. Seems to be essential for minus-strand RNAs and subgenomic 26S mRNAs synthesis. Displays mono-ADP-ribosylhydrolase activity. ADP-ribosylation is a post-translantional modification that controls various processes of the host cell and the virus probably needs to revert it for optimal viral replication. Binds proteins of G3BP family and sequesters them into the viral RNA replication complexes thereby inhibiting the formation of host stress granules on viral mRNAs. The nsp3-G3BP complexes bind viral RNAs and probably orchestrate the assembly of viral replication complexes, thanks to the ability of G3BP family members to self-assemble and bind DNA. In terms of biological role, RNA dependent RNA polymerase. Replicates genomic and antigenomic RNA by recognizing replications specific signals. The early replication complex formed by the polyprotein P123 and nsP4 synthesizes minus-strand RNAs. The late replication complex composed of fully processed nsP1-nsP4 is responsible for the production of genomic and subgenomic plus-strand RNAs. The core catalytic domain of nsP4 also possesses terminal adenylyltransferase (TATase) activity that is probably involved in maintenance and repair of the poly(A) tail, an element required for replication of the viral genome. The protein is Polyprotein P1234 of Aedes aegypti (Yellowfever mosquito).